A 178-amino-acid chain; its full sequence is MNDREPNQKESKESVNDAVPRARKVDDQQLRVSKIRDGTVIDHLTAGEALNVLAILGIDGSSGEGVSVGMNVISDRLGRKDIVKVEDRELSQSEVDVLAVIAPEATINIIRDYAVVDKKRIERPTAVTGLLFCPNRNCITNANEPINTRFIVLDEGLQCDYCGSIVRESEVPTYLDVA.

Positions 1 to 15 are enriched in basic and acidic residues; that stretch reads MNDREPNQKESKESV. The segment at 1–23 is disordered; that stretch reads MNDREPNQKESKESVNDAVPRAR. Residues Cys133, Cys138, Cys159, and Cys162 each contribute to the Zn(2+) site.

The protein belongs to the PyrI family. Contains catalytic and regulatory chains. Zn(2+) is required as a cofactor.

Functionally, involved in allosteric regulation of aspartate carbamoyltransferase. This chain is Aspartate carbamoyltransferase regulatory chain, found in Haloquadratum walsbyi (strain DSM 16790 / HBSQ001).